The chain runs to 640 residues: Threonine--tRNA ligase (640 aa).

In terms of domain architecture, TGS spans 1–61; it reads MPAITLPDGS…EHDAYVEIVT (61 aa). The interval 242-533 is catalytic; that stretch reads DHRRLGRTQD…LIEHYGGALP (292 aa). Zn(2+) is bound by residues Cys333, His384, and His510.

Belongs to the class-II aminoacyl-tRNA synthetase family. As to quaternary structure, homodimer. It depends on Zn(2+) as a cofactor.

The protein localises to the cytoplasm. The catalysed reaction is tRNA(Thr) + L-threonine + ATP = L-threonyl-tRNA(Thr) + AMP + diphosphate + H(+). Its function is as follows. Catalyzes the attachment of threonine to tRNA(Thr) in a two-step reaction: L-threonine is first activated by ATP to form Thr-AMP and then transferred to the acceptor end of tRNA(Thr). Also edits incorrectly charged L-seryl-tRNA(Thr). In Halorhodospira halophila (strain DSM 244 / SL1) (Ectothiorhodospira halophila (strain DSM 244 / SL1)), this protein is Threonine--tRNA ligase.